Consider the following 219-residue polypeptide: Melanoma-associated antigen H1 (219 aa).

Positions Met1–Ala13 are enriched in basic residues. Positions Met1–Phe84 are disordered. The 198-residue stretch at Met1–Asp198 folds into the MAGE domain. Positions Pro44–Thr57 are enriched in acidic residues. Residues Pro58 to Ala74 show a composition bias toward low complexity. Residue Tyr195 is modified to Phosphotyrosine.

The protein is Melanoma-associated antigen H1 (MAGEH1) of Homo sapiens (Human).